The primary structure comprises 670 residues: DNA ligase (670 aa).

NAD(+)-binding positions include 32-36, 81-82, and E110; these read DAYYD and SL. Catalysis depends on K112, which acts as the N6-AMP-lysine intermediate. Residues R133, E170, K289, and K313 each coordinate NAD(+). Positions 407, 410, 425, and 431 each coordinate Zn(2+). In terms of domain architecture, BRCT spans 590–670; it reads EDELRLKGQT…ELLVFLGLAG (81 aa).

It belongs to the NAD-dependent DNA ligase family. LigA subfamily. Mg(2+) is required as a cofactor. It depends on Mn(2+) as a cofactor.

The enzyme catalyses NAD(+) + (deoxyribonucleotide)n-3'-hydroxyl + 5'-phospho-(deoxyribonucleotide)m = (deoxyribonucleotide)n+m + AMP + beta-nicotinamide D-nucleotide.. Its function is as follows. DNA ligase that catalyzes the formation of phosphodiester linkages between 5'-phosphoryl and 3'-hydroxyl groups in double-stranded DNA using NAD as a coenzyme and as the energy source for the reaction. It is essential for DNA replication and repair of damaged DNA. This chain is DNA ligase, found in Shewanella denitrificans (strain OS217 / ATCC BAA-1090 / DSM 15013).